The sequence spans 178 residues: Ribosomal RNA small subunit methyltransferase G (178 aa).

S-adenosyl-L-methionine-binding positions include glycine 54, leucine 59, 105–106, and arginine 120; that span reads LE.

It belongs to the methyltransferase superfamily. RNA methyltransferase RsmG family.

It is found in the cytoplasm. It catalyses the reaction guanosine(527) in 16S rRNA + S-adenosyl-L-methionine = N(7)-methylguanosine(527) in 16S rRNA + S-adenosyl-L-homocysteine. In terms of biological role, specifically methylates the N7 position of guanine in position 527 of 16S rRNA. The chain is Ribosomal RNA small subunit methyltransferase G from Helicobacter pylori (strain J99 / ATCC 700824) (Campylobacter pylori J99).